Reading from the N-terminus, the 422-residue chain is UDP-N-acetyl-D-glucosamine 6-dehydrogenase (422 aa).

Residues valine 14, aspartate 32, arginine 37, threonine 83, and threonine 118 each coordinate NAD(+). Cysteine 258 functions as the Nucleophile in the catalytic mechanism. Residue arginine 329 coordinates NAD(+).

This sequence belongs to the UDP-glucose/GDP-mannose dehydrogenase family.

It carries out the reaction UDP-N-acetyl-alpha-D-glucosamine + 2 NAD(+) + H2O = UDP-2-acetamido-2-deoxy-alpha-D-glucuronate + 2 NADH + 3 H(+). The protein operates within bacterial outer membrane biogenesis; LPS O-antigen biosynthesis. Requires either potassium or ammonium-containing salts for activity. Functionally, dehydrogenase required for the biosynthesis of the B-band O antigen of serotype O6 lipopolysaccharide. Is also required for flagellin glycosylation. Catalyzes the conversion of UDP-N-acetylglucosamine (UDP-GlcNAc) to UDP-N-acetylglucosaminuronic acid (UDP-GlcNAcA). Can also catalyze the conversion of UDP-N-acetyl-galactosamine (UDP-GalNAc) to UDP-N-acetylgalactosaminuronic acid (UDP-GalNAcA), with low efficiency. Can use NAD(+) or NADP(+), with a preference for NAD(+). This chain is UDP-N-acetyl-D-glucosamine 6-dehydrogenase, found in Pseudomonas aeruginosa.